The sequence spans 840 residues: Cullin-4 (840 aa).

The span at 1-11 (MTSGAPPTIST) shows a compositional bias: polar residues. The interval 1-82 (MTSGAPPTIS…TGNSSRTTAT (82 aa)) is disordered. The span at 33 to 48 (TEAKQMRGDTENRSDG) shows a compositional bias: basic and acidic residues. Polar residues predominate over residues 69–82 (FRSQTGNSSRTTAT). Residues 772-831 (DRQYKIDAAVVRIMKARKQLNHQTLMTELLQQLRFPVSTADIKKRLESLIEREYISRDPE) enclose the Cullin neddylation domain. Lysine 786 is covalently cross-linked (Glycyl lysine isopeptide (Lys-Gly) (interchain with G-Cter in NEDD8)).

Belongs to the cullin family. As to quaternary structure, part of an E3 ubiquitin-protein ligase complex including cul-4 and ddb-1. In terms of processing, neddylated. Deneddylated via its interaction with the COP9 signalosome (CSN) complex.

It participates in protein modification; protein ubiquitination. Functionally, component of cullin-based E3 ubiquitin-protein ligase complexes which mediate the ubiquitination and subsequent proteasomal degradation of target proteins. The functional specificity of the E3 ubiquitin-protein ligase complex depends on the variable substrate recognition component. In association with ddb-1 directs ubiquitination of cdt-1 during S phase and is required for restraining DNA rereplication. Probably is involved in ubiquitination of cki-1. The chain is Cullin-4 (cul-4) from Caenorhabditis elegans.